A 72-amino-acid polypeptide reads, in one-letter code: Conotoxin 3 (72 aa).

Positions 1–22 (MKLTCVVIVAVLLLTACQLITA) are cleaved as a signal peptide. Positions 23–46 (DDSRGTQEHRALRSDTKLSMLTLR) are excised as a propeptide. Intrachain disulfides connect C47/C61, C54/C64, and C60/C71.

It belongs to the conotoxin O1 superfamily. Expressed by the venom duct.

Its subcellular location is the secreted. This Conus striatus (Striated cone) protein is Conotoxin 3.